Here is a 508-residue protein sequence, read N- to C-terminus: Histidine ammonia-lyase (508 aa).

The 5-imidazolinone (Ala-Gly) cross-link spans 145–147 (ASG). Position 146 is a 2,3-didehydroalanine (Ser) (Ser146).

It belongs to the PAL/histidase family. In terms of processing, contains an active site 4-methylidene-imidazol-5-one (MIO), which is formed autocatalytically by cyclization and dehydration of residues Ala-Ser-Gly.

The protein resides in the cytoplasm. The enzyme catalyses L-histidine = trans-urocanate + NH4(+). It participates in amino-acid degradation; L-histidine degradation into L-glutamate; N-formimidoyl-L-glutamate from L-histidine: step 1/3. The polypeptide is Histidine ammonia-lyase (Myxococcus xanthus (strain DK1622)).